Here is a 258-residue protein sequence, read N- to C-terminus: Development-specific 25 kDa protein (258 aa).

10 to 34 (VYVGGFSGFGYQVCQMMMKKPMKHL) contacts NAD(+). Substrate is bound at residue Ser138. Catalysis depends on Tyr151, which acts as the Proton acceptor.

Belongs to the short-chain dehydrogenases/reductases (SDR) family.

The chain is Development-specific 25 kDa protein from Sarcophaga peregrina (Flesh fly).